The sequence spans 474 residues: 3-isopropylmalate dehydratase large subunit (474 aa).

A disordered region spans residues 293–313 (GTTPGQGIGITEEIPAPEDLP). The [4Fe-4S] cluster site is built by cysteine 348, cysteine 408, and cysteine 411.

This sequence belongs to the aconitase/IPM isomerase family. LeuC type 1 subfamily. Heterodimer of LeuC and LeuD. [4Fe-4S] cluster serves as cofactor.

It catalyses the reaction (2R,3S)-3-isopropylmalate = (2S)-2-isopropylmalate. Its pathway is amino-acid biosynthesis; L-leucine biosynthesis; L-leucine from 3-methyl-2-oxobutanoate: step 2/4. Catalyzes the isomerization between 2-isopropylmalate and 3-isopropylmalate, via the formation of 2-isopropylmaleate. The protein is 3-isopropylmalate dehydratase large subunit of Natronomonas pharaonis (strain ATCC 35678 / DSM 2160 / CIP 103997 / JCM 8858 / NBRC 14720 / NCIMB 2260 / Gabara) (Halobacterium pharaonis).